The following is a 179-amino-acid chain: Ubiquitin-conjugating enzyme E2 2 (179 aa).

The interval 1–28 (MSTPARRRLMRDFKRMQQDPPSGVSASP) is disordered. In terms of domain architecture, UBC core spans 4 to 150 (PARRRLMRDF…VRETVENSWN (147 aa)). C88 functions as the Glycyl thioester intermediate in the catalytic mechanism. Positions 145 to 179 (VENSWNDDDDEEEEEEDEDEAEDEDDDDDDNIDED) are disordered. Acidic residues predominate over residues 149–179 (WNDDDDEEEEEEDEDEAEDEDDDDDDNIDED). Positions 151–179 (DDDDEEEEEEDEDEAEDEDDDDDDNIDED) are acidic tail.

This sequence belongs to the ubiquitin-conjugating enzyme family.

The protein resides in the cytoplasm. It localises to the nucleus. The enzyme catalyses S-ubiquitinyl-[E1 ubiquitin-activating enzyme]-L-cysteine + [E2 ubiquitin-conjugating enzyme]-L-cysteine = [E1 ubiquitin-activating enzyme]-L-cysteine + S-ubiquitinyl-[E2 ubiquitin-conjugating enzyme]-L-cysteine.. It participates in protein modification; protein ubiquitination. Its function is as follows. Catalyzes the covalent attachment of ubiquitin to other proteins. Plays a role in transcription regulation by catalyzing the monoubiquitination of histone H2B to form H2BK123ub1. H2BK123ub1 gives a specific tag for epigenetic transcriptional activation and is also a prerequisite for H3K4me and H3K79me formation. Also involved in postreplication repair of UV-damaged DNA, in N-end rule-dependent protein degradation and in sporulation. The sequence is that of Ubiquitin-conjugating enzyme E2 2 (UBC2) from Candida albicans (strain SC5314 / ATCC MYA-2876) (Yeast).